A 248-amino-acid chain; its full sequence is tRNA (guanine-N(1)-)-methyltransferase (248 aa).

S-adenosyl-L-methionine-binding positions include G117 and 137–142; that span reads LGDFVL.

It belongs to the RNA methyltransferase TrmD family. In terms of assembly, homodimer.

Its subcellular location is the cytoplasm. The enzyme catalyses guanosine(37) in tRNA + S-adenosyl-L-methionine = N(1)-methylguanosine(37) in tRNA + S-adenosyl-L-homocysteine + H(+). In terms of biological role, specifically methylates guanosine-37 in various tRNAs. In Herminiimonas arsenicoxydans, this protein is tRNA (guanine-N(1)-)-methyltransferase.